Consider the following 464-residue polypeptide: Cysteine--tRNA ligase (464 aa).

C29 serves as a coordination point for Zn(2+). A 'HIGH' region motif is present at residues 31–41 (ATVQGVPHIGH). The interval 160-180 (RLDEVQQGESTASGKRDPRDF) is disordered. The Zn(2+) site is built by C208, H233, and E237. The short motif at 264–268 (KMSKS) is the 'KMSKS' region element. K267 is a binding site for ATP.

This sequence belongs to the class-I aminoacyl-tRNA synthetase family. Monomer. It depends on Zn(2+) as a cofactor.

The protein resides in the cytoplasm. The enzyme catalyses tRNA(Cys) + L-cysteine + ATP = L-cysteinyl-tRNA(Cys) + AMP + diphosphate. The protein is Cysteine--tRNA ligase of Saccharopolyspora erythraea (strain ATCC 11635 / DSM 40517 / JCM 4748 / NBRC 13426 / NCIMB 8594 / NRRL 2338).